A 274-amino-acid chain; its full sequence is Coiled-coil domain-containing protein 28A (274 aa).

Residues 121–166 (VSKSTGFSNPASQSTSQRPKLKRVMKEKTKPQGGEGKGAQSTPIQH) form a disordered region. Residues 122 to 138 (SKSTGFSNPASQSTSQR) show a composition bias toward polar residues. Residues 234–263 (KRKTASDSNLDRLLSDLEELNSSIQKLHLA) adopt a coiled-coil conformation.

This Homo sapiens (Human) protein is Coiled-coil domain-containing protein 28A (CCDC28A).